The primary structure comprises 172 residues: Large ribosomal subunit protein uL5 (172 aa).

The protein belongs to the universal ribosomal protein uL5 family. Part of the 50S ribosomal subunit; contacts the 5S rRNA and probably tRNA. Forms a bridge to the 30S subunit in the 70S ribosome.

This is one of the proteins that bind and probably mediate the attachment of the 5S RNA into the large ribosomal subunit, where it forms part of the central protuberance. In the 70S ribosome it contacts protein S13 of the 30S subunit (bridge B1b), connecting the 2 subunits; this bridge is implicated in subunit movement. May contact the P site tRNA; the 5S rRNA and some of its associated proteins might help stabilize positioning of ribosome-bound tRNAs. This Haloferax mediterranei (strain ATCC 33500 / DSM 1411 / JCM 8866 / NBRC 14739 / NCIMB 2177 / R-4) (Halobacterium mediterranei) protein is Large ribosomal subunit protein uL5.